The sequence spans 238 residues: MKISILTLFPEMFSIFNHSIIGRAQENKIIELEVLNIRDNTLDKHKKVDDYPYGGGAGMVMAPQPIVDTIRKAKENNKGKVVFLGPRGKTFNQKMAMDLSKEENLIFLCGHYEGIDQRVYKHIDMEVSLGDFILTGGEMAAIPVIDSILRLIPGVLGKEESFMDESFSEDLLEYPQYTRPYEFEGECVPEILLSGHHENIRKWRRLQSLNLTENRRPDLYKNVILTKEDKKLLGRKNK.

S-adenosyl-L-methionine contacts are provided by residues Gly-110 and 129–134 (LGDFIL).

This sequence belongs to the RNA methyltransferase TrmD family. As to quaternary structure, homodimer.

Its subcellular location is the cytoplasm. The enzyme catalyses guanosine(37) in tRNA + S-adenosyl-L-methionine = N(1)-methylguanosine(37) in tRNA + S-adenosyl-L-homocysteine + H(+). In terms of biological role, specifically methylates guanosine-37 in various tRNAs. The chain is tRNA (guanine-N(1)-)-methyltransferase from Clostridium botulinum (strain Alaska E43 / Type E3).